The chain runs to 334 residues: GTPase Obg (334 aa).

An Obg domain is found at Met1–Leu159. The region spanning Ala160 to His331 is the OBG-type G domain. Residues Gly166–Ser173, Phe191–Tyr195, Asp212–Gly215, Asn282–Asp285, and Ser312–Ala314 each bind GTP. Mg(2+) contacts are provided by Ser173 and Thr193.

Belongs to the TRAFAC class OBG-HflX-like GTPase superfamily. OBG GTPase family. As to quaternary structure, monomer. It depends on Mg(2+) as a cofactor.

The protein resides in the cytoplasm. An essential GTPase which binds GTP, GDP and possibly (p)ppGpp with moderate affinity, with high nucleotide exchange rates and a fairly low GTP hydrolysis rate. Plays a role in control of the cell cycle, stress response, ribosome biogenesis and in those bacteria that undergo differentiation, in morphogenesis control. The chain is GTPase Obg from Francisella philomiragia subsp. philomiragia (strain ATCC 25017 / CCUG 19701 / FSC 153 / O#319-036).